We begin with the raw amino-acid sequence, 178 residues long: S-alkylcysteine N-acetyltransferase (178 aa).

The N-acetyltransferase domain occupies 4 to 163; the sequence is DIFRLATVED…IGVMMHKVLI (160 aa).

This sequence belongs to the acetyltransferase family.

The catalysed reaction is an S-substituted L-cysteine + acetyl-CoA = an N-acetyl-L-cysteine-S-conjugate + CoA + H(+). The enzyme catalyses S-benzyl-L-cysteine + acetyl-CoA = N-acetyl-S-benzyl-L-cysteine + CoA + H(+). It carries out the reaction S-methyl-L-cysteine + acetyl-CoA = N-acetyl-S-methyl-L-cysteine + CoA + H(+). It functions in the pathway amino-acid metabolism. Functionally, involved in a cysteine salvage pathway from S-alkylcysteine. Catalyzes the first step in this pathway, i.e. the amine acetylation of an S-alkylcysteine with a preference for S-benzyl-L-cysteine over S-methyl-L-cysteine. This pathway is likely important in the catabolism of alkylated cysteine generated by proteolysis of alkylated glutathione formed in the detoxification of a wide range of electrophiles. The protein is S-alkylcysteine N-acetyltransferase of Bacillus subtilis (strain 168).